A 303-amino-acid polypeptide reads, in one-letter code: Rhomboid-related protein 2 (303 aa).

The interval methionine 20–arginine 39 is disordered. Positions glutamate 28–arginine 39 are enriched in basic and acidic residues. The next 7 helical transmembrane spans lie at proline 72 to tryptophan 92, leucine 128 to isoleucine 148, valine 159 to proline 179, leucine 183 to valine 203, phenylalanine 212 to leucine 232, valine 245 to phenylalanine 265, and phenylalanine 278 to phenylalanine 298. The active-site Nucleophile is serine 187. Residue histidine 250 is part of the active site.

The protein belongs to the peptidase S54 family. In terms of processing, proteolytic processing of the proenzyme produces a N-terminal fragment (NTF) and a C-terminal fragment (CTF). The processing is required for activation of the protease.

It localises to the cell membrane. The catalysed reaction is Cleaves type-1 transmembrane domains using a catalytic dyad composed of serine and histidine that are contributed by different transmembrane domains.. In terms of biological role, involved in regulated intramembrane proteolysis and the subsequent release of functional polypeptides from their membrane anchors. Known substrate: EFNB3. This is Rhomboid-related protein 2 (RHBDL2) from Homo sapiens (Human).